The sequence spans 115 residues: Holo-[acyl-carrier-protein] synthase (115 aa).

2 residues coordinate Mg(2+): Asp6 and Glu51.

This sequence belongs to the P-Pant transferase superfamily. AcpS family. Mg(2+) serves as cofactor.

Its subcellular location is the cytoplasm. It carries out the reaction apo-[ACP] + CoA = holo-[ACP] + adenosine 3',5'-bisphosphate + H(+). In terms of biological role, transfers the 4'-phosphopantetheine moiety from coenzyme A to a Ser of acyl-carrier-protein. This chain is Holo-[acyl-carrier-protein] synthase, found in Campylobacter jejuni subsp. jejuni serotype O:6 (strain 81116 / NCTC 11828).